Here is a 134-residue protein sequence, read N- to C-terminus: Prefoldin subunit 4 (134 aa).

Ala-2 is subject to N-acetylalanine. A Phosphoserine modification is found at Ser-125.

Belongs to the prefoldin subunit beta family. As to quaternary structure, heterohexamer of two PFD-alpha type and four PFD-beta type subunits. Interacts with URI1; the interaction is phosphorylation-dependent and occurs in a growth-dependent manner.

The protein localises to the nucleus. Its subcellular location is the cytoplasm. It localises to the mitochondrion. Binds specifically to cytosolic chaperonin (c-CPN) and transfers target proteins to it. Binds to nascent polypeptide chain and promotes folding in an environment in which there are many competing pathways for nonnative proteins. The chain is Prefoldin subunit 4 (PFDN4) from Homo sapiens (Human).